Here is a 529-residue protein sequence, read N- to C-terminus: Non-reducing end alpha-L-arabinofuranosidase BoGH43B (529 aa).

The N-terminal stretch at 1 to 23 (MMKNSCRLLLILIGLWMANVSLA) is a signal peptide. The active-site Proton acceptor is Asp38. Glu198 serves as the catalytic Proton donor.

It belongs to the glycosyl hydrolase 43 family.

It localises to the periplasm. It catalyses the reaction Hydrolysis of terminal non-reducing alpha-L-arabinofuranoside residues in alpha-L-arabinosides.. Its pathway is glucan metabolism; xyloglucan degradation. Functionally, alpha-L-arabinofuranosidase involved in xyloglucan degradation by mediating the cleavage of terminal non-reducing alpha-L-arabinofuranoside residues in xyloglucan branches, converting the 'S' units to 'X' units. This Bacteroides ovatus (strain ATCC 8483 / DSM 1896 / JCM 5824 / BCRC 10623 / CCUG 4943 / NCTC 11153) protein is Non-reducing end alpha-L-arabinofuranosidase BoGH43B.